A 348-amino-acid polypeptide reads, in one-letter code: Papaya proteinase 4 (348 aa).

The first 18 residues, 1–18 (MAIICSFSKLLFVAICLF), serve as a signal peptide directing secretion. The propeptide at 19–132 (GHMSLSYCDF…EEFVNEDIVD (114 aa)) is activation peptide. Cystine bridges form between C154/C195, C188/C227, and C285/C336. The active site involves C157. Catalysis depends on residues H291 and N311.

It belongs to the peptidase C1 family.

It catalyses the reaction Preferential cleavage: Gly-|-Xaa, in proteins and in small molecule substrates.. With respect to regulation, not inhibited by cystatin. Thiol protease with a substrate specificity very different from the other thiol proteases. In Carica papaya (Papaya), this protein is Papaya proteinase 4.